A 479-amino-acid chain; its full sequence is Adenosylhomocysteinase (479 aa).

Substrate contacts are provided by Thr-56, Asp-133, and Glu-199. 200–202 (TTT) provides a ligand contact to NAD(+). Positions 229 and 233 each coordinate substrate. NAD(+) is bound by residues Asn-234, 263 to 268 (GYGDVG), Glu-286, Asn-321, 342 to 344 (IGH), and Asn-390.

The protein belongs to the adenosylhomocysteinase family. In terms of assembly, homotetramer. Requires NAD(+) as cofactor.

The enzyme catalyses S-adenosyl-L-homocysteine + H2O = L-homocysteine + adenosine. It functions in the pathway amino-acid biosynthesis; L-homocysteine biosynthesis; L-homocysteine from S-adenosyl-L-homocysteine: step 1/1. Its function is as follows. Adenosylhomocysteine is a competitive inhibitor of S-adenosyl-L-methionine-dependent methyl transferase reactions; therefore adenosylhomocysteinase may play a key role in the control of methylations via regulation of the intracellular concentration of adenosylhomocysteine. The sequence is that of Adenosylhomocysteinase from Plasmodium yoelii yoelii.